We begin with the raw amino-acid sequence, 115 residues long: Hydrogenase maturation factor HypA (115 aa).

H2 contributes to the Ni(2+) binding site. Zn(2+) contacts are provided by C73, C76, C89, and C92.

Belongs to the HypA/HybF family.

Functionally, involved in the maturation of [NiFe] hydrogenases. Required for nickel insertion into the metal center of the hydrogenase. In Shewanella halifaxensis (strain HAW-EB4), this protein is Hydrogenase maturation factor HypA.